A 450-amino-acid polypeptide reads, in one-letter code: Exodeoxyribonuclease 7 large subunit (450 aa).

This sequence belongs to the XseA family. Heterooligomer composed of large and small subunits.

It localises to the cytoplasm. It carries out the reaction Exonucleolytic cleavage in either 5'- to 3'- or 3'- to 5'-direction to yield nucleoside 5'-phosphates.. Its function is as follows. Bidirectionally degrades single-stranded DNA into large acid-insoluble oligonucleotides, which are then degraded further into small acid-soluble oligonucleotides. The protein is Exodeoxyribonuclease 7 large subunit of Listeria welshimeri serovar 6b (strain ATCC 35897 / DSM 20650 / CCUG 15529 / CIP 8149 / NCTC 11857 / SLCC 5334 / V8).